Here is a 206-residue protein sequence, read N- to C-terminus: Large ribosomal subunit protein uL4 (206 aa).

The segment at 44–87 is disordered; the sequence is NRQGTQSAKTRSEVSGGGRKPWRQKGTGHARQGSTRSPQWTGGG.

This sequence belongs to the universal ribosomal protein uL4 family. Part of the 50S ribosomal subunit.

One of the primary rRNA binding proteins, this protein initially binds near the 5'-end of the 23S rRNA. It is important during the early stages of 50S assembly. It makes multiple contacts with different domains of the 23S rRNA in the assembled 50S subunit and ribosome. In terms of biological role, forms part of the polypeptide exit tunnel. This chain is Large ribosomal subunit protein uL4, found in Lachnospira eligens (strain ATCC 27750 / DSM 3376 / VPI C15-48 / C15-B4) (Eubacterium eligens).